Reading from the N-terminus, the 368-residue chain is L-cysteine desulfhydrase Cds1 (368 aa).

N6-(pyridoxal phosphate)lysine is present on lysine 67. Pyridoxal 5'-phosphate contacts are provided by residues 203–207 (GTGGT) and serine 299.

It belongs to the cysteine synthase/cystathionine beta-synthase family. Cds1 subfamily. Requires pyridoxal 5'-phosphate as cofactor.

The protein localises to the cytoplasm. It carries out the reaction L-cysteine + H2O = hydrogen sulfide + pyruvate + NH4(+) + H(+). Functionally, a cysteine desulfhydrase that generates hydrogen sulfide, H(2)S. The H(2)S produced by this enzyme stimulates respiration in M.tuberculosis, mediated primarily via cytochrome bd with a lesser contribution from cytochrome bc1/aa3. H(2)S modulates the balance between respiration and glycolysis, and also contributes to redox homeostasis. Probably eliminates toxic levels of Cys (which can induce oxidative stress). The sequence is that of L-cysteine desulfhydrase Cds1 from Mycobacterium tuberculosis (strain ATCC 25177 / H37Ra).